Consider the following 467-residue polypeptide: Coiled-coil domain-containing protein 174 (467 aa).

Disordered regions lie at residues 40–77 and 124–162; these read VFGK…EEQK and EMEA…SEEW. Residues 63–99 adopt a coiled-coil conformation; it reads NRAEKDAEQKIEEQKTLDKAREKLEEKAKLYEKMTKG. Composition is skewed to basic and acidic residues over residues 64-77 and 124-139; these read RAEK…EEQK and EMEA…KAGE. Residue Ser-197 is modified to Phosphoserine. A coiled-coil region spans residues 267-309; that stretch reads LEMLREQTTDQRTKRENIKEKRKAILEARLAKLRQKKMKKSKE. 2 disordered regions span residues 299 to 363 and 378 to 453; these read LRQK…HIRE and RQSD…TVTF. Pro residues predominate over residues 324-336; sequence PLPPEPEAVPTPR. Basic and acidic residues-rich tracts occupy residues 348-363 and 378-389; these read VQER…HIRE and RQSDLRAERDPE. Polar residues predominate over residues 425 to 437; sequence PDQSHGPSPEHTS. Pro residues predominate over residues 439 to 448; that stretch reads TPAPDNPPQA.

As to expression, widely expressed.

It localises to the nucleus. Probably involved in neuronal development. In Homo sapiens (Human), this protein is Coiled-coil domain-containing protein 174 (CCDC174).